We begin with the raw amino-acid sequence, 313 residues long: Porphobilinogen deaminase (313 aa).

An S-(dipyrrolylmethanemethyl)cysteine modification is found at C242.

This sequence belongs to the HMBS family. As to quaternary structure, monomer. Dipyrromethane is required as a cofactor.

It carries out the reaction 4 porphobilinogen + H2O = hydroxymethylbilane + 4 NH4(+). The protein operates within porphyrin-containing compound metabolism; protoporphyrin-IX biosynthesis; coproporphyrinogen-III from 5-aminolevulinate: step 2/4. In terms of biological role, tetrapolymerization of the monopyrrole PBG into the hydroxymethylbilane pre-uroporphyrinogen in several discrete steps. The chain is Porphobilinogen deaminase from Marinobacter nauticus (strain ATCC 700491 / DSM 11845 / VT8) (Marinobacter aquaeolei).